The chain runs to 378 residues: MKILVDENMPYARELFSRLGEVKAVPGRPIPVAELDDADALMVRSVTKVNETLLAGKGIKFVGTATAGTDHVDDAWLAKAGIGFSAAPGCNAIAVVEYVFSSLLMLGERDGFALQDRTVGIVGVGNVGGRLQKRLEAMGIRTLLCDPPRADRGDEGDFRSLDELVEHADVITFHTPLFKDGAYKTFHLADETLIRRLKPGAILINACRGPVVDNAALLKCLEEGQNLSVVLDVWEPEPDLNVALLNRVDVATAHIAGYTLEGKARGTTQVFEAYSAFIGNAQQVALDTLLPAPEFGRITLHGPLDESSLKRLVHLVYDVRRDDALLRKVAGIPGEFDKLRKNYLERREWSSLYVICDDADAAALLNNLGFNAVHNPAR.

Substrate contacts are provided by S45 and T66. D146 and T175 together coordinate NAD(+). Residue R208 is part of the active site. D232 provides a ligand contact to NAD(+). E237 is an active-site residue. Residue H254 is the Proton donor of the active site. G257 serves as a coordination point for NAD(+). Residue Y258 participates in substrate binding.

It belongs to the D-isomer specific 2-hydroxyacid dehydrogenase family. PdxB subfamily. As to quaternary structure, homodimer.

The protein resides in the cytoplasm. The catalysed reaction is 4-phospho-D-erythronate + NAD(+) = (R)-3-hydroxy-2-oxo-4-phosphooxybutanoate + NADH + H(+). It participates in cofactor biosynthesis; pyridoxine 5'-phosphate biosynthesis; pyridoxine 5'-phosphate from D-erythrose 4-phosphate: step 2/5. Its function is as follows. Catalyzes the oxidation of erythronate-4-phosphate to 3-hydroxy-2-oxo-4-phosphonooxybutanoate. The polypeptide is Erythronate-4-phosphate dehydrogenase (Enterobacter sp. (strain 638)).